Reading from the N-terminus, the 247-residue chain is Sortase A (247 aa).

At 1–9 the chain is on the cytoplasmic side; it reads MRNKKKLHG. Residues 10–30 form a helical membrane-spanning segment; that stretch reads FFNFVRWLLVVLLIIVGLALV. Topologically, residues 31-247 are extracellular; the sequence is FNKPIRNAFI…FSKKYNQINL (217 aa). Histidine 140 acts as the Proton donor/acceptor in catalysis. The Acyl-thioester intermediate role is filled by cysteine 206.

It belongs to the bacterial sortase family. Class A subfamily.

It localises to the cell membrane. Functionally, transpeptidase that anchors surface proteins to the cell wall. Recognizes and modifies its substrate by proteolytic cleavage of a C-terminal sorting signal. Following cleavage, a covalent intermediate is formed via a thioester bond between the sortase and its substrate, which is then transferred and covalently attached to the cell wall. This sortase recognizes a Leu-Pro-x-Thr-Gly (LPXTG) motif, which is cleaved by the sortase between the threonine and glycine residues. Essential for adherence to eukaryotic cells and for binding to fibronectin and fibrinogen. The sequence is that of Sortase A from Streptococcus agalactiae serotype III (strain NEM316).